Consider the following 158-residue polypeptide: Small ribosomal subunit protein uS19 (158 aa).

The protein belongs to the universal ribosomal protein uS19 family.

Its function is as follows. Protein S19 forms a complex with S13 that binds strongly to the 16S ribosomal RNA. The sequence is that of Small ribosomal subunit protein uS19 from Pyrobaculum calidifontis (strain DSM 21063 / JCM 11548 / VA1).